Here is an 831-residue protein sequence, read N- to C-terminus: AMP deaminase (831 aa).

Disordered stretches follow at residues 26–45 (NPGA…QDTP), 66–110 (NGTQ…KLLN), and 130–149 (NAVV…METT). A phosphoserine mark is found at serine 79 and serine 84. The Zn(2+) site is built by histidine 319 and histidine 321. Substrate is bound by residues histidine 321 and 390–395 (KFNLKY). Histidine 587 lines the Zn(2+) pocket. Substrate is bound at residue glutamate 590. Catalysis depends on histidine 609, which acts as the Proton acceptor. A Zn(2+)-binding site is contributed by aspartate 664. A substrate-binding site is contributed by 665 to 668 (DPLQ). 4 positions are modified to phosphoserine: serine 758, serine 776, serine 780, and serine 782.

This sequence belongs to the metallo-dependent hydrolases superfamily. Adenosine and AMP deaminases family. Homotetramer. It depends on Zn(2+) as a cofactor.

Its subcellular location is the cytoplasm. It carries out the reaction AMP + H2O + H(+) = IMP + NH4(+). The protein operates within purine metabolism; IMP biosynthesis via salvage pathway; IMP from AMP: step 1/1. In terms of biological role, AMP deaminase plays a critical role in energy metabolism. The protein is AMP deaminase (ada1) of Schizosaccharomyces pombe (strain 972 / ATCC 24843) (Fission yeast).